The sequence spans 745 residues: Copper-transporting ATPase (745 aa).

Residues 1-67 (MKESFYIEGM…LIEKLGYSPK (67 aa)) form the HMA domain. Topologically, residues 1-83 (MKESFYIEGM…KKEFFSPNVK (83 aa)) are cytoplasmic. Cys12 and Cys15 together coordinate Cu cation. Residues 84–104 (LALAVIFTLFVVYLSMGAMLS) form a helical membrane-spanning segment. Residues 105-124 (PSLLPESLLAINNHSNFLNA) are Extracellular-facing. A helical membrane pass occupies residues 125 to 144 (CLQLIGALIVMHLGRDFYIQ). The Cytoplasmic portion of the chain corresponds to 145–151 (GFKALWH). A helical membrane pass occupies residues 152-172 (RQPNMSSLIAIGTSAALISSL). At 173–194 (WQLYLVYTNHYTDQWSYGHYYF) the chain is on the extracellular side. Residues 195–215 (ESVCVILMFVMVGKRIENVSK) traverse the membrane as a helical segment. Residues 216–343 (DKALDAMQAL…KAEISRLADK (128 aa)) lie on the Cytoplasmic side of the membrane. Residues 344–366 (VSSVFVPSVIAIAILAFVVWLII) form a helical membrane-spanning segment. At 367–379 (APKPDFWWNFGIA) the chain is on the extracellular side. A helical transmembrane segment spans residues 380 to 397 (LEVFVSVLVISCPCALGL). The Cytoplasmic portion of the chain corresponds to 398–685 (ATPMSILVAN…KLSQATIKNI (288 aa)). Asp435 (4-aspartylphosphate intermediate) is an active-site residue. Asp631 and Asp635 together coordinate Mg(2+). A helical membrane pass occupies residues 686–705 (KENLFWAFCYNSVFIPLACG). Residues 706–716 (VLYKANIMLSP) are Extracellular-facing. Residues 717–735 (AIAGLAMSLSSVSVVLNSQ) form a helical membrane-spanning segment. Topologically, residues 736–745 (RLRNFKIKDH) are cytoplasmic.

Belongs to the cation transport ATPase (P-type) (TC 3.A.3) family. Type IB subfamily.

The protein resides in the cell membrane. The catalysed reaction is Cu(2+)(in) + ATP + H2O = Cu(2+)(out) + ADP + phosphate + H(+). Probably involved in copper export. This Helicobacter pylori (Campylobacter pylori) protein is Copper-transporting ATPase (copA).